Reading from the N-terminus, the 637-residue chain is Nuclear receptor-binding protein homolog (637 aa).

Positions Met1 to Thr14 are enriched in polar residues. 2 disordered regions span residues Met1–Ala60 and Ser74–Glu99. Residues Pro36–Gln46 show a composition bias toward low complexity. The segment covering Asp88–Glu98 has biased composition (acidic residues). The Protein kinase domain occupies Arg109–Leu375. 2 disordered regions span residues Pro465–Asp489 and Pro617–Asn637. Phosphoserine occurs at positions 473, 479, and 482. Thr484 is modified (phosphothreonine).

The protein belongs to the protein kinase superfamily. Ser/Thr protein kinase family.

It localises to the cytoplasm. It is found in the cell cortex. May play a role in subcellular trafficking between the endoplasmic reticulum and Golgi apparatus. The protein is Nuclear receptor-binding protein homolog of Drosophila melanogaster (Fruit fly).